The following is a 90-amino-acid chain: Small ribosomal subunit protein bS16 (90 aa).

It belongs to the bacterial ribosomal protein bS16 family.

The sequence is that of Small ribosomal subunit protein bS16 from Bacillus velezensis (strain DSM 23117 / BGSC 10A6 / LMG 26770 / FZB42) (Bacillus amyloliquefaciens subsp. plantarum).